The following is a 452-amino-acid chain: Gamma-aminobutyric acid receptor subunit delta (452 aa).

The N-terminal stretch at 1–24 (MDAPARLLAPLLLLCAQQLRGTRA) is a signal peptide. Residues 25–251 (MNDIGDYVGS…HLRRNRGVYI (227 aa)) are Extracellular-facing. Residues N103 and N106 are each glycosylated (N-linked (GlcNAc...) asparagine). C164 and C178 form a disulfide bridge. Residues 252 to 271 (IQSYMPSVLLVAMSWVSFWI) traverse the membrane as a helical segment. Topologically, residues 272-275 (SQAA) are cytoplasmic. A helical membrane pass occupies residues 276 to 298 (VPARVSLGITTVLTMTTLMVSAR). Over 299–308 (SSLPRASAIK) the chain is Extracellular. The helical transmembrane segment at 309-331 (ALDVYFWICYVFVFAALVEYAFA) threads the bilayer. Residues 332 to 426 (HFNADYRKKQ…ARLRPIDADT (95 aa)) are Cytoplasmic-facing. S390 is subject to Phosphoserine. Residues 427–449 (IDIYARAVFPAAFAAVNVIYWAA) form a helical membrane-spanning segment. The Extracellular segment spans residues 450 to 452 (YAM).

The protein belongs to the ligand-gated ion channel (TC 1.A.9) family. Gamma-aminobutyric acid receptor (TC 1.A.9.5) subfamily. GABRD sub-subfamily. In terms of assembly, heteropentamer, formed by a combination of alpha (GABRA1-6), beta (GABRB1-3), gamma (GABRG1-3), delta (GABRD), epsilon (GABRE), rho (GABRR1-3), pi (GABRP) and theta (GABRQ) chains, each subunit exhibiting distinct physiological and pharmacological properties.

It is found in the cell membrane. The catalysed reaction is chloride(in) = chloride(out). Its function is as follows. Delta subunit of the heteropentameric ligand-gated chloride channel gated by gamma-aminobutyric acid (GABA), a major inhibitory neurotransmitter in the brain. GABA-gated chloride channels, also named GABA(A) receptors (GABAAR), consist of five subunits arranged around a central pore and contain GABA active binding site(s) located at the alpha and beta subunit interface(s). When activated by GABA, GABAARs selectively allow the flow of chloride anions across the cell membrane down their electrochemical gradient. GABAARs containing delta/GABRD subunits are predominantly located in extrasynaptic or perisynaptic positions on hippocampus and cerebellar granule cells, and contribute to the tonic GABAergic inhibition. GABAAR containing alpha-4-beta-3-delta subunits can simultaneously bind GABA and histamine where histamine binds at the interface of two neighboring beta subunits, which may be involved in the regulation of sleep and wakefulness. This Homo sapiens (Human) protein is Gamma-aminobutyric acid receptor subunit delta.